Consider the following 997-residue polypeptide: Phosphoenolpyruvate carboxylase (997 aa).

The interval 1–67 is disordered; that stretch reads MKSSGSARTA…KPAARTREDK (67 aa). Active-site residues include histidine 207 and lysine 649.

This sequence belongs to the PEPCase type 1 family. Requires Mg(2+) as cofactor.

It carries out the reaction oxaloacetate + phosphate = phosphoenolpyruvate + hydrogencarbonate. Forms oxaloacetate, a four-carbon dicarboxylic acid source for the tricarboxylic acid cycle. The polypeptide is Phosphoenolpyruvate carboxylase (Burkholderia vietnamiensis (strain G4 / LMG 22486) (Burkholderia cepacia (strain R1808))).